The chain runs to 301 residues: N-acetylmuramic acid 6-phosphate etherase (301 aa).

The SIS domain maps to 57–220; the sequence is IAEAFRQGGR…TTGAMIRTGK (164 aa). Glu-85 serves as the catalytic Proton donor. Glu-116 is a catalytic residue.

The protein belongs to the GCKR-like family. MurNAc-6-P etherase subfamily. In terms of assembly, homodimer.

It carries out the reaction N-acetyl-D-muramate 6-phosphate + H2O = N-acetyl-D-glucosamine 6-phosphate + (R)-lactate. The protein operates within amino-sugar metabolism; 1,6-anhydro-N-acetylmuramate degradation. It functions in the pathway amino-sugar metabolism; N-acetylmuramate degradation. Its pathway is cell wall biogenesis; peptidoglycan recycling. Its function is as follows. Specifically catalyzes the cleavage of the D-lactyl ether substituent of MurNAc 6-phosphate, producing GlcNAc 6-phosphate and D-lactate. Together with AnmK, is also required for the utilization of anhydro-N-acetylmuramic acid (anhMurNAc) either imported from the medium or derived from its own cell wall murein, and thus plays a role in cell wall recycling. In Photorhabdus laumondii subsp. laumondii (strain DSM 15139 / CIP 105565 / TT01) (Photorhabdus luminescens subsp. laumondii), this protein is N-acetylmuramic acid 6-phosphate etherase.